Reading from the N-terminus, the 269-residue chain is Thymidylate synthase (269 aa).

DUMP-binding positions include Arg-21 and 125–126 (RR). Catalysis depends on Cys-145, which acts as the Nucleophile. Residues 171–174 (RSGD), Asn-182, and 212–214 (HVY) each bind dUMP. Residue Asp-174 participates in (6R)-5,10-methylene-5,6,7,8-tetrahydrofolate binding. Residue Ala-268 coordinates (6R)-5,10-methylene-5,6,7,8-tetrahydrofolate.

The protein belongs to the thymidylate synthase family. Bacterial-type ThyA subfamily. Homodimer.

It localises to the cytoplasm. It catalyses the reaction dUMP + (6R)-5,10-methylene-5,6,7,8-tetrahydrofolate = 7,8-dihydrofolate + dTMP. The protein operates within pyrimidine metabolism; dTTP biosynthesis. Its function is as follows. Catalyzes the reductive methylation of 2'-deoxyuridine-5'-monophosphate (dUMP) to 2'-deoxythymidine-5'-monophosphate (dTMP) while utilizing 5,10-methylenetetrahydrofolate (mTHF) as the methyl donor and reductant in the reaction, yielding dihydrofolate (DHF) as a by-product. This enzymatic reaction provides an intracellular de novo source of dTMP, an essential precursor for DNA biosynthesis. The sequence is that of Thymidylate synthase from Cutibacterium acnes (strain DSM 16379 / KPA171202) (Propionibacterium acnes).